Reading from the N-terminus, the 338-residue chain is Phosphate acyltransferase (338 aa).

It belongs to the PlsX family. Homodimer. Probably interacts with PlsY.

The protein resides in the cytoplasm. The enzyme catalyses a fatty acyl-[ACP] + phosphate = an acyl phosphate + holo-[ACP]. Its pathway is lipid metabolism; phospholipid metabolism. Catalyzes the reversible formation of acyl-phosphate (acyl-PO(4)) from acyl-[acyl-carrier-protein] (acyl-ACP). This enzyme utilizes acyl-ACP as fatty acyl donor, but not acyl-CoA. The protein is Phosphate acyltransferase of Gloeobacter violaceus (strain ATCC 29082 / PCC 7421).